The sequence spans 172 residues: Probable tryptophan transport protein (172 aa).

4 helical membrane-spanning segments follow: residues 7-29 (VIMALFAAIGAALHSIIPPFLGG), 49-71 (VQNVLVIGIVTGIISALTTAFPA), 104-126 (AVLTVIGTILSGIVFLSSALLIV), and 136-158 (FAAVVLPAAVLNTISMIIIYPIV).

This sequence belongs to the vitamin uptake transporter (VUT/ECF) (TC 2.A.88) family. TrpP subfamily.

The protein localises to the cell membrane. Functionally, probably involved in tryptophan uptake. This Bacillus subtilis (strain 168) protein is Probable tryptophan transport protein (trpP).